The chain runs to 313 residues: Aspartate carbamoyltransferase catalytic subunit (313 aa).

Carbamoyl phosphate-binding residues include Arg-58 and Thr-59. Lys-86 contacts L-aspartate. 3 residues coordinate carbamoyl phosphate: Arg-108, His-136, and Gln-139. 2 residues coordinate L-aspartate: Arg-169 and Arg-223. Gly-265 and Pro-266 together coordinate carbamoyl phosphate.

The protein belongs to the aspartate/ornithine carbamoyltransferase superfamily. ATCase family. Heterododecamer (2C3:3R2) of six catalytic PyrB chains organized as two trimers (C3), and six regulatory PyrI chains organized as three dimers (R2).

The catalysed reaction is carbamoyl phosphate + L-aspartate = N-carbamoyl-L-aspartate + phosphate + H(+). It participates in pyrimidine metabolism; UMP biosynthesis via de novo pathway; (S)-dihydroorotate from bicarbonate: step 2/3. Catalyzes the condensation of carbamoyl phosphate and aspartate to form carbamoyl aspartate and inorganic phosphate, the committed step in the de novo pyrimidine nucleotide biosynthesis pathway. In Anaeromyxobacter sp. (strain K), this protein is Aspartate carbamoyltransferase catalytic subunit.